The chain runs to 396 residues: MKHSQKYRRYGIYEKTGNPFIKGLQRLLIACLFISGSLSIVVFQICLQVLLPWSKIRFQNGINQSKKAFIVLLCMILNMVAPSSLNVTFETSRPLKNSSNAKPCFRFKDRAIIIANHQMYADWIYLWWLSFVSNLGGNVYIILKKALQYIPLLGFGMRNFKFIFLSRNWQKDEKALTNSLVSMDLNARCKGPLTNYKSCYSKTNESIAAYNLIMFPEGTNLSLKTREKSEAFCQRAHLDHVQLRHLLLPHSKGLKFAVEKLAPSLDAIYDVTIGYSPALRTEYVGTKFTLKKIFLMGVYPEKVDFYIREFRVNEIPLQDDEVFFNWLLGVWKEKDQLLEDYYNTGQFKSNAKNDNQSIVVTTQTTGFQHETLTPRILSYYGFFAFLILVFVMKKNH.

Helical transmembrane passes span 27–47 and 69–89; these read LLIA…QICL and FIVL…NVTF. The HXXXXD motif motif lies at 117 to 122; the sequence is HQMYAD. 2 helical membrane passes run 123–143 and 372–392; these read WIYL…YIIL and LTPR…VFVM.

It belongs to the 1-acyl-sn-glycerol-3-phosphate acyltransferase family.

It is found in the membrane. This is an uncharacterized protein from Saccharomyces cerevisiae (strain ATCC 204508 / S288c) (Baker's yeast).